A 623-amino-acid chain; its full sequence is 1-deoxy-D-xylulose-5-phosphate synthase (623 aa).

Thiamine diphosphate is bound by residues histidine 80 and 121–123; that span reads GHS. Mg(2+) is bound at residue aspartate 152. Residues 153-154, asparagine 181, tyrosine 289, and glutamate 372 each bind thiamine diphosphate; that span reads GA. Asparagine 181 lines the Mg(2+) pocket.

The protein belongs to the transketolase family. DXPS subfamily. Homodimer. The cofactor is Mg(2+). It depends on thiamine diphosphate as a cofactor.

It catalyses the reaction D-glyceraldehyde 3-phosphate + pyruvate + H(+) = 1-deoxy-D-xylulose 5-phosphate + CO2. Its pathway is metabolic intermediate biosynthesis; 1-deoxy-D-xylulose 5-phosphate biosynthesis; 1-deoxy-D-xylulose 5-phosphate from D-glyceraldehyde 3-phosphate and pyruvate: step 1/1. Catalyzes the acyloin condensation reaction between C atoms 2 and 3 of pyruvate and glyceraldehyde 3-phosphate to yield 1-deoxy-D-xylulose-5-phosphate (DXP). This is 1-deoxy-D-xylulose-5-phosphate synthase from Baumannia cicadellinicola subsp. Homalodisca coagulata.